The chain runs to 274 residues: 2-succinyl-6-hydroxy-2,4-cyclohexadiene-1-carboxylate synthase (274 aa).

This sequence belongs to the AB hydrolase superfamily. MenH family. In terms of assembly, monomer.

The enzyme catalyses 5-enolpyruvoyl-6-hydroxy-2-succinyl-cyclohex-3-ene-1-carboxylate = (1R,6R)-6-hydroxy-2-succinyl-cyclohexa-2,4-diene-1-carboxylate + pyruvate. The protein operates within quinol/quinone metabolism; 1,4-dihydroxy-2-naphthoate biosynthesis; 1,4-dihydroxy-2-naphthoate from chorismate: step 3/7. It participates in quinol/quinone metabolism; menaquinone biosynthesis. Its function is as follows. Catalyzes a proton abstraction reaction that results in 2,5-elimination of pyruvate from 2-succinyl-5-enolpyruvyl-6-hydroxy-3-cyclohexene-1-carboxylate (SEPHCHC) and the formation of 2-succinyl-6-hydroxy-2,4-cyclohexadiene-1-carboxylate (SHCHC). This chain is 2-succinyl-6-hydroxy-2,4-cyclohexadiene-1-carboxylate synthase, found in Yersinia enterocolitica serotype O:8 / biotype 1B (strain NCTC 13174 / 8081).